Here is a 131-residue protein sequence, read N- to C-terminus: MLCIFYIARLCNLIIYSLYSLLMFPMQKLISFMFGNLNPFDSVLDKDEKIQDNINTNHKPIESKEINNDLPLTVLDKKDTSDINIRNDNGVFDFIKIPNPFKKHYEYYCNQNTIKEPPRKGLVERMMNMVE.

This Ovis aries (Sheep) protein is T3C protein.